The chain runs to 195 residues: Transcriptional regulator LdrP (195 aa).

Residues 110 to 182 (GELRARIARY…YRRVYLLDLA (73 aa)) form the HTH crp-type domain. The segment at residues 142–161 (HEEIADATASIRESVSKVLA) is a DNA-binding region (H-T-H motif).

Its function is as follows. Activates transcription. Positively regulates PcrtB promoter upstream of the crtB operon in a cAMP-independent manner. Regulated genes include genes encoding DNA photolyase, phytoene synthase and cytochrome P450 monooxygenase, which are involved in carotenoid biosynthesis. Positively regulates the light-inducible gene cluster in the megaplasmid in a cAMP-independent manner. This chain is Transcriptional regulator LdrP, found in Thermus thermophilus (strain ATCC BAA-163 / DSM 7039 / HB27).